Here is a 657-residue protein sequence, read N- to C-terminus: Sodium/glucose cotransporter 4 (657 aa).

Over 1–24 (MPASPEPVTATPEPEEVPAKFTLE) the chain is Extracellular. Residues 25-45 (AADIAVVVVYFVFVLAVGIWS) traverse the membrane as a helical segment. The Cytoplasmic portion of the chain corresponds to 46-79 (SIRANRGTVGGYFLAGRSMTWWPIGASLMSSNVG). Residues 80–100 (SGLFIGLAGTGAAGGLAVGGF) traverse the membrane as a helical segment. Topologically, residues 101-104 (EWNA) are extracellular. Residues 105 to 125 (AWVLIALGWIFVPVYISAGVV) form a helical membrane-spanning segment. Over 126-147 (TMPEYLRKRFGGQRIRIYMSVL) the chain is Cytoplasmic. The chain crosses the membrane as a helical span at residues 148–168 (SLILYILTKISTDIFSGALFI). Residues 169–180 (QVSLGWDLYLST) are Extracellular-facing. The chain crosses the membrane as a helical span at residues 181-201 (VILLAVTALYTIAGGLTAVIY). Topologically, residues 202-207 (TDALQT) are cytoplasmic. A helical membrane pass occupies residues 208-228 (VIMVIGAFVLMFIAFDKVGWY). Over 229-265 (EGLLVQYEKAAPALTVPNTTCHLPRSDAFHIFRDPVT) the chain is Extracellular. Asn-246 carries N-linked (GlcNAc...) asparagine glycosylation. The helical transmembrane segment at 266-286 (GDIPWPGLIFGLTVLATWVWC) threads the bilayer. At 287–307 (TDQVIVQRSLSAKNLSHAKAG) the chain is on the cytoplasmic side. Residues 308–328 (SVLGGYLKVFPMFFVVMPGMI) traverse the membrane as a helical segment. Residues 329–373 (SRALYPDEVACVDPDECQKICGAKVGCSNIAYPKLVVELMPVGMR) are Extracellular-facing. The chain crosses the membrane as a helical span at residues 374 to 396 (GLMIAVMMAALMSSLTSIFNSSS). Over 397 to 417 (TLFTMDIWQRIRPRASEKELM) the chain is Cytoplasmic. A helical transmembrane segment spans residues 418–438 (VVGRVFILLLVALSIVWIPVI). Topologically, residues 439–451 (QTANSGQLFDYIQ) are extracellular. The chain crosses the membrane as a helical span at residues 452–472 (AITSFLSPPITTVFIMAIFWG). The Cytoplasmic portion of the chain corresponds to 473 to 478 (RVNEQG). A helical transmembrane segment spans residues 479 to 499 (AFWGLMVGLVVGMVRMIMEFV). Residues 500-520 (YGTPSCGETDLRPSLLKDVHY) are Extracellular-facing. A helical membrane pass occupies residues 521 to 541 (LYFALILLALTVLIITAVSLC). The Cytoplasmic portion of the chain corresponds to 542-636 (TAPIPEKHLV…SIEEDHMWKT (95 aa)). Residues 637-657 (VCNVNALILLTANVFLWGYFA) form a helical membrane-spanning segment.

It belongs to the sodium:solute symporter (SSF) (TC 2.A.21) family.

Its subcellular location is the membrane. In terms of biological role, probable sodium-dependent sugar transporter. The protein is Sodium/glucose cotransporter 4 (slc5a9) of Danio rerio (Zebrafish).